Here is a 429-residue protein sequence, read N- to C-terminus: Citrate synthase (429 aa).

Residues His-306 and Asp-364 contribute to the active site.

Belongs to the citrate synthase family.

It catalyses the reaction oxaloacetate + acetyl-CoA + H2O = citrate + CoA + H(+). It functions in the pathway carbohydrate metabolism; tricarboxylic acid cycle; isocitrate from oxaloacetate: step 1/2. This Rhizobium meliloti (strain 1021) (Ensifer meliloti) protein is Citrate synthase (gltA).